Consider the following 183-residue polypeptide: NADH dehydrogenase [ubiquinone] iron-sulfur protein 4, mitochondrial (183 aa).

A mitochondrion-targeting transit peptide spans 1-28 (MSALRQVMCRSTASLQLYQANRAAAARW). The residue at position 181 (Ser181) is a Phosphoserine.

The protein belongs to the complex I NDUFS4 subunit family.

The protein localises to the mitochondrion inner membrane. Accessory subunit of the mitochondrial membrane respiratory chain NADH dehydrogenase (Complex I), that is believed not to be involved in catalysis. Complex I functions in the transfer of electrons from NADH to the respiratory chain. The immediate electron acceptor for the enzyme is believed to be ubiquinone. The sequence is that of NADH dehydrogenase [ubiquinone] iron-sulfur protein 4, mitochondrial from Drosophila melanogaster (Fruit fly).